Here is a 460-residue protein sequence, read N- to C-terminus: Beta-1,3-xylanase TXYA (460 aa).

The signal sequence occupies residues 1–22 (MKKLAKMISVATLGACAFQAHA). The GH26 domain occupies 23 to 337 (LDGKLVPDQG…LSDPKFIRHS (315 aa)). Residue Glu138 is the Proton donor of the active site. Residue Glu234 is the Nucleophile of the active site. The interval 347–371 (GNSDGGNGGDNGGDNGGDNGGETPE) is disordered. Residues 348 to 366 (NSDGGNGGDNGGDNGGDNG) are compositionally biased toward gly residues. Residues 368 to 460 (ETPENCTDDF…TVTFTNQVCN (93 aa)) are carbohydrate binding module (CBM). Disulfide bonds link Cys373/Cys459 and Cys404/Cys409.

The protein belongs to the glycosyl hydrolase 26 family.

The catalysed reaction is Random hydrolysis of (1-&gt;3)-beta-D-glycosidic linkages in (1-&gt;3)-beta-D-xylans.. Its activity is regulated as follows. Completely inhibited by Cu(2+), Hg(2+) and N-bromosuccinimide. Strongly inhibited by Ag(+), Zn(2+) and Pb(2+). Moderately inhibited by Fe(3+), Al(3+), Mn(2+), dithiothreitol and p-chloromercuribenzoic acid. Slightly activated by Mg(2+) and Ca(2+). Unaffected by Na(+), K(+), Ba(2+), EDTA, iodoacetic acid and N-ethylmalaimide. Its function is as follows. Catalyzes the hydrolysis of beta-1,3-xylan into oligosaccharides, mainly xylotriose and xylobiose with smaller amounts of xylotetraose, xylose, xylopentaose and xylohexaose. Weakly active toward beta-1,3-xylotriose, yielding xylose and xylobiose. Converts beta-1,3-xylotetraose into xylotriose, xylobiose and xylose. Converts beta-1,3-xylopentaose into xylotetraose, xylotriose, xylobiose and xylose. Does not hydrolyze xylobiose, p-nitrophenyl-beta-xyloside, beta-1,4-xylan, curdlan or carboxymethylcellulose. The protein is Beta-1,3-xylanase TXYA of Vibrio sp.